Reading from the N-terminus, the 233-residue chain is Putative N-acetylmannosamine-6-phosphate 2-epimerase (233 aa).

Belongs to the NanE family.

The enzyme catalyses an N-acyl-D-glucosamine 6-phosphate = an N-acyl-D-mannosamine 6-phosphate. It functions in the pathway amino-sugar metabolism; N-acetylneuraminate degradation; D-fructose 6-phosphate from N-acetylneuraminate: step 3/5. In terms of biological role, converts N-acetylmannosamine-6-phosphate (ManNAc-6-P) to N-acetylglucosamine-6-phosphate (GlcNAc-6-P). The sequence is that of Putative N-acetylmannosamine-6-phosphate 2-epimerase from Yersinia pseudotuberculosis serotype IB (strain PB1/+).